The primary structure comprises 88 residues: Yop proteins translocation protein S (88 aa).

2 helical membrane-spanning segments follow: residues 15-35 and 49-69; these read WLVLVLSMPPVLVAAVVGTLV and LGFVIKLIAVVVTLFATASWL.

This sequence belongs to the FliQ/MopD/SpaQ family.

The protein localises to the cell membrane. In terms of biological role, component of the Yop secretion machinery. This chain is Yop proteins translocation protein S (yscS), found in Yersinia pestis.